A 60-amino-acid chain; its full sequence is Large ribosomal subunit protein uL30 (60 aa).

It belongs to the universal ribosomal protein uL30 family. In terms of assembly, part of the 50S ribosomal subunit.

This Christiangramia forsetii (strain DSM 17595 / CGMCC 1.15422 / KT0803) (Gramella forsetii) protein is Large ribosomal subunit protein uL30.